We begin with the raw amino-acid sequence, 429 residues long: Enolase (429 aa).

Position 168 (Q168) interacts with (2R)-2-phosphoglycerate. Residue E210 is the Proton donor of the active site. Residues D247, E288, and D315 each coordinate Mg(2+). (2R)-2-phosphoglycerate is bound by residues K340, R369, S370, and K391. K340 functions as the Proton acceptor in the catalytic mechanism.

It belongs to the enolase family. Requires Mg(2+) as cofactor.

The protein resides in the cytoplasm. It is found in the secreted. It localises to the cell surface. The catalysed reaction is (2R)-2-phosphoglycerate = phosphoenolpyruvate + H2O. It participates in carbohydrate degradation; glycolysis; pyruvate from D-glyceraldehyde 3-phosphate: step 4/5. Its function is as follows. Catalyzes the reversible conversion of 2-phosphoglycerate (2-PG) into phosphoenolpyruvate (PEP). It is essential for the degradation of carbohydrates via glycolysis. This chain is Enolase, found in Nostoc punctiforme (strain ATCC 29133 / PCC 73102).